The chain runs to 156 residues: ATP synthase subunit b (156 aa).

A helical membrane pass occupies residues 5 to 25; that stretch reads LTLIGQAIAFAIFVAFCMKFV.

The protein belongs to the ATPase B chain family. As to quaternary structure, F-type ATPases have 2 components, F(1) - the catalytic core - and F(0) - the membrane proton channel. F(1) has five subunits: alpha(3), beta(3), gamma(1), delta(1), epsilon(1). F(0) has three main subunits: a(1), b(2) and c(10-14). The alpha and beta chains form an alternating ring which encloses part of the gamma chain. F(1) is attached to F(0) by a central stalk formed by the gamma and epsilon chains, while a peripheral stalk is formed by the delta and b chains.

The protein resides in the cell inner membrane. Its function is as follows. F(1)F(0) ATP synthase produces ATP from ADP in the presence of a proton or sodium gradient. F-type ATPases consist of two structural domains, F(1) containing the extramembraneous catalytic core and F(0) containing the membrane proton channel, linked together by a central stalk and a peripheral stalk. During catalysis, ATP synthesis in the catalytic domain of F(1) is coupled via a rotary mechanism of the central stalk subunits to proton translocation. Component of the F(0) channel, it forms part of the peripheral stalk, linking F(1) to F(0). This is ATP synthase subunit b from Acinetobacter baylyi (strain ATCC 33305 / BD413 / ADP1).